A 562-amino-acid polypeptide reads, in one-letter code: Serine/threonine-protein kinase STN7, chloroplastic (562 aa).

The N-terminal 45 residues, 1-45 (MATISPGGAYIGTPSPFLGKKLKPFSLTSPILSFKPTVKLNSSCR), are a transit peptide targeting the chloroplast. Residues 134–452 (FVVGKKLGEG…AKAALAHPYF (319 aa)) enclose the Protein kinase domain. ATP-binding positions include 140-148 (LGEGSFGVV) and Lys167. Catalysis depends on Asp279, which acts as the Proton acceptor. The residue at position 526 (Ser526) is a Phosphoserine. Thr537 and Thr541 each carry phosphothreonine.

The protein belongs to the protein kinase superfamily. Ser/Thr protein kinase family. Phosphorylated.

The protein resides in the plastid. Its subcellular location is the chloroplast thylakoid membrane. The enzyme catalyses L-seryl-[protein] + ATP = O-phospho-L-seryl-[protein] + ADP + H(+). It carries out the reaction L-threonyl-[protein] + ATP = O-phospho-L-threonyl-[protein] + ADP + H(+). In terms of biological role, serine/threonine protein kinase required for state transition by phosphorylating light-harvesting complex II outer antennae (LCHII). State transition plays a central role in response to environmental changes and allows to adjust to changing light conditions via the redistribution of light excitation energy between photosystem II (PSII) and photosystem I (PSI). Phosphorylates the minor light harvesting protein LHCB4.2/CP29 and is involved in the light-dependent phosphorylation of TSP9. Acts as a key component of the long-term response (LTR) signaling pathway. Mediates phosphorylation-dependent PTAC16 subcellular localization to regulate plastid gene expression. The chain is Serine/threonine-protein kinase STN7, chloroplastic (STN7) from Arabidopsis thaliana (Mouse-ear cress).